The primary structure comprises 170 residues: Large ribosomal subunit protein uL5 (170 aa).

The protein belongs to the universal ribosomal protein uL5 family. In terms of assembly, part of the 50S ribosomal subunit; contacts the 5S rRNA and probably tRNA. Forms a bridge to the 30S subunit in the 70S ribosome.

This is one of the proteins that bind and probably mediate the attachment of the 5S RNA into the large ribosomal subunit, where it forms part of the central protuberance. In the 70S ribosome it contacts protein S13 of the 30S subunit (bridge B1b), connecting the 2 subunits; this bridge is implicated in subunit movement. May contact the P site tRNA; the 5S rRNA and some of its associated proteins might help stabilize positioning of ribosome-bound tRNAs. The chain is Large ribosomal subunit protein uL5 from Thermoplasma acidophilum (strain ATCC 25905 / DSM 1728 / JCM 9062 / NBRC 15155 / AMRC-C165).